The sequence spans 236 residues: 3-oxoacyl-[acyl-carrier-protein] reductase (236 aa).

M1 carries the N-acetylmethionine modification. NADP(+) contacts are provided by residues 11 to 14 (SRGI) and 34 to 35 (RN). At K40 the chain carries N6-acetyllysine. NADP(+)-binding positions include D56 and 83-85 (AAG). K96 carries the post-translational modification N6-acetyllysine. Position 134 (S134) interacts with substrate. Residues Y147, K151, and 180-182 (IRT) each bind NADP(+). Y147 (proton acceptor) is an active-site residue. K194 bears the N6-acetyllysine mark.

The protein belongs to the short-chain dehydrogenases/reductases (SDR) family. Homotetramer (in vitro). Heterotetramer with HSD17B8; contains two molecules each of HSD17B8 and CBR4. Does not form homotetramers when HSD17B8 is coexpressed, only heterotetramers (in vitro).

The protein resides in the mitochondrion matrix. The enzyme catalyses a (3R)-hydroxyacyl-[ACP] + NADP(+) = a 3-oxoacyl-[ACP] + NADPH + H(+). It carries out the reaction a quinone + NADPH + H(+) = a quinol + NADP(+). It functions in the pathway lipid metabolism; fatty acid biosynthesis. Functionally, component of the heterotetramer complex KAR (3-ketoacyl-[acyl carrier protein] reductase or 3-ketoacyl-[ACP] reductase) that forms part of the mitochondrial fatty acid synthase (mtFAS). Beta-subunit of the KAR heterotetramer complex, responsible for the 3-ketoacyl-ACP reductase activity of the mtFAS, reduces 3-oxoacyl-[ACP] to (3R)-hydroxyacyl-[ACP] in a NADPH-dependent manner with no chain length preference, thereby participating in mitochondrial fatty acid biosynthesis. The homotetramer has NADPH-dependent quinone reductase activity (in vitro), hence could play a role in protection against cytotoxicity of exogenous quinones. As a heterotetramer, it can also reduce 9,10-phenanthrenequinone, 1,4-benzoquinone and various other o-quinones and p-quinones (in vitro). This Mus musculus (Mouse) protein is 3-oxoacyl-[acyl-carrier-protein] reductase (Cbr4).